The sequence spans 109 residues: Polyprenyl transferase subC (109 aa).

Transmembrane regions (helical) follow at residues 39–59 and 84–104; these read LFCVLAAYLFCGAGMVWNDWI and QAFVWMALQVIASCAVLHVML.

It belongs to the UbiA prenyltransferase family. The cofactor is Mg(2+).

It localises to the membrane. It participates in secondary metabolite biosynthesis; terpenoid biosynthesis. Functionally, polyprenyl transferase; part of the gene cluster that mediates the biosynthesis of the immunosuppressants subglutinols, meroterpenoids consisting of an alpha-pyrone (4-hydroxy-5,6-dimethyl-2-pyrone) moiety attached to a decalin core fused to a five-membered cyclic ether carrying a prenylside chain. The first step of the pathway is the synthesis of the alpha-pyrone moiety by the polyketide synthase subA via condensation of one acetyl-CoA starter unit with 3 malonyl-CoA units and 2 methylations. The alpha-pyrone is then combined with geranylgeranyl pyrophosphate (GGPP) formed by the GGPP synthase subD through the action of the prenyltransferase subC to yield a linear alpha-pyrone diterpenoid. Subsequent steps in the subglutinol biosynthetic pathway involve the decalin core formation, which is thought to be initiated by the epoxidation of the C10-C11 olefin by the FAD-dependent oxidoreductase subE. The following cyclization cascade would be catalyzed by the terpene cyclase subB. Lastly, the FAD-dependent dehydrogenase subF probably catalyzes the five-membered cyclic ether formation to complete the formation of subglutinol A. Subsequent redox reactions appear to give rise to subglutinol C and D, however, it remains unclear which enzymes are responsible for these transformations. SubD may have secondary function in the conversion of the identified subglutinols to subglutinol analog 45, which seems to be the major product of the cluster. The polypeptide is Polyprenyl transferase subC (Metarhizium robertsii (strain ARSEF 23 / ATCC MYA-3075) (Metarhizium anisopliae (strain ARSEF 23))).